We begin with the raw amino-acid sequence, 112 residues long: Ribonuclease P protein component (112 aa).

This sequence belongs to the RnpA family. In terms of assembly, consists of a catalytic RNA component (M1 or rnpB) and a protein subunit.

It catalyses the reaction Endonucleolytic cleavage of RNA, removing 5'-extranucleotides from tRNA precursor.. In terms of biological role, RNaseP catalyzes the removal of the 5'-leader sequence from pre-tRNA to produce the mature 5'-terminus. It can also cleave other RNA substrates such as 4.5S RNA. The protein component plays an auxiliary but essential role in vivo by binding to the 5'-leader sequence and broadening the substrate specificity of the ribozyme. This chain is Ribonuclease P protein component, found in Mycoplasma mobile (strain ATCC 43663 / 163K / NCTC 11711) (Mesomycoplasma mobile).